The chain runs to 314 residues: Homoserine kinase (314 aa).

Position 96-106 (96-106) interacts with ATP; the sequence is PIGSGLGSSAC.

The protein belongs to the GHMP kinase family. Homoserine kinase subfamily.

Its subcellular location is the cytoplasm. It carries out the reaction L-homoserine + ATP = O-phospho-L-homoserine + ADP + H(+). It functions in the pathway amino-acid biosynthesis; L-threonine biosynthesis; L-threonine from L-aspartate: step 4/5. Catalyzes the ATP-dependent phosphorylation of L-homoserine to L-homoserine phosphate. The polypeptide is Homoserine kinase (Haemophilus influenzae (strain PittEE)).